The following is a 321-amino-acid chain: Probable 3-hydroxyisobutyrate dehydrogenase, mitochondrial (321 aa).

NAD(+) contacts are provided by residues 23-52 (KTVGFIGLGNMGGHQAINLIKKGHNLIVFD), 86-87 (LP), and Thr-117. Lys-192 is a catalytic residue. Lys-267 is a binding site for NAD(+).

Belongs to the HIBADH-related family. 3-hydroxyisobutyrate dehydrogenase subfamily.

The protein resides in the mitochondrion. The enzyme catalyses 3-hydroxy-2-methylpropanoate + NAD(+) = 2-methyl-3-oxopropanoate + NADH + H(+). It participates in amino-acid degradation; L-valine degradation. The polypeptide is Probable 3-hydroxyisobutyrate dehydrogenase, mitochondrial (hibA) (Dictyostelium discoideum (Social amoeba)).